A 184-amino-acid chain; its full sequence is Uroplakin-2 (184 aa).

The signal sequence occupies residues Met1–Ala25. Positions Asp26 to Arg84 are excised as a propeptide. 3 N-linked (GlcNAc...) asparagine glycosylation sites follow: Asn28, Asn57, and Asn66. The Lumenal portion of the chain corresponds to Glu85–Gly155. A helical membrane pass occupies residues Met156–Trp180. The Cytoplasmic segment spans residues Asp181 to Lys184.

This sequence belongs to the uroplakin-2 family. As to quaternary structure, interacts with uroplakin-1a (UPK1A).

The protein localises to the cell membrane. Its function is as follows. Component of the asymmetric unit membrane (AUM); a highly specialized biomembrane elaborated by terminally differentiated urothelial cells. May play an important role in regulating the assembly of the AUM. The chain is Uroplakin-2 (Upk2) from Mus musculus (Mouse).